A 350-amino-acid polypeptide reads, in one-letter code: Transmembrane protein 185A (350 aa).

The next 7 helical transmembrane spans lie at 16 to 36, 41 to 61, 81 to 101, 111 to 131, 177 to 197, 211 to 231, and 240 to 260; these read LIYA…DGII, WAVF…ASVG, FKAM…EVLV, FWLL…AACV, ILMS…VLFL, ITMA…EILL, and AFSC…LMAT. The interval 298-350 is mediates interaction with MAP1B; it reads DLHHEDNEETEETPVPEPPKIAPMFRKKARVVITQSPGKYALPPPKLNIEMPD.

This sequence belongs to the TMEM185 family. Interacts with MAP1B.

The protein localises to the cell projection. It is found in the dendrite. The protein resides in the membrane. The polypeptide is Transmembrane protein 185A (TMEM185A) (Pongo abelii (Sumatran orangutan)).